A 500-amino-acid polypeptide reads, in one-letter code: Probable cytosol aminopeptidase (500 aa).

Mn(2+) contacts are provided by lysine 265 and aspartate 270. The active site involves lysine 277. Residues aspartate 288, aspartate 347, and glutamate 349 each contribute to the Mn(2+) site. Residue arginine 351 is part of the active site.

The protein belongs to the peptidase M17 family. Mn(2+) is required as a cofactor.

It localises to the cytoplasm. The enzyme catalyses Release of an N-terminal amino acid, Xaa-|-Yaa-, in which Xaa is preferably Leu, but may be other amino acids including Pro although not Arg or Lys, and Yaa may be Pro. Amino acid amides and methyl esters are also readily hydrolyzed, but rates on arylamides are exceedingly low.. It catalyses the reaction Release of an N-terminal amino acid, preferentially leucine, but not glutamic or aspartic acids.. Presumably involved in the processing and regular turnover of intracellular proteins. Catalyzes the removal of unsubstituted N-terminal amino acids from various peptides. The protein is Probable cytosol aminopeptidase of Rickettsia typhi (strain ATCC VR-144 / Wilmington).